The primary structure comprises 105 residues: Small ribosomal subunit protein bS6 (105 aa).

The protein belongs to the bacterial ribosomal protein bS6 family.

In terms of biological role, binds together with bS18 to 16S ribosomal RNA. The sequence is that of Small ribosomal subunit protein bS6 from Lawsonia intracellularis (strain PHE/MN1-00).